The sequence spans 378 residues: Dual-specificity RNA methyltransferase RlmN (378 aa).

Residue E96 is the Proton acceptor of the active site. The 239-residue stretch at 102–340 folds into the Radical SAM core domain; the sequence is DNGRGTLCVS…ATVRTTRGDD (239 aa). Residues C109 and C345 are joined by a disulfide bond. [4Fe-4S] cluster-binding residues include C116, C120, and C123. Residues 170-171, S202, 224-226, and N302 each bind S-adenosyl-L-methionine; these read GE and SLH. The active-site S-methylcysteine intermediate is C345.

This sequence belongs to the radical SAM superfamily. RlmN family. The cofactor is [4Fe-4S] cluster.

The protein resides in the cytoplasm. It catalyses the reaction adenosine(2503) in 23S rRNA + 2 reduced [2Fe-2S]-[ferredoxin] + 2 S-adenosyl-L-methionine = 2-methyladenosine(2503) in 23S rRNA + 5'-deoxyadenosine + L-methionine + 2 oxidized [2Fe-2S]-[ferredoxin] + S-adenosyl-L-homocysteine. It carries out the reaction adenosine(37) in tRNA + 2 reduced [2Fe-2S]-[ferredoxin] + 2 S-adenosyl-L-methionine = 2-methyladenosine(37) in tRNA + 5'-deoxyadenosine + L-methionine + 2 oxidized [2Fe-2S]-[ferredoxin] + S-adenosyl-L-homocysteine. In terms of biological role, specifically methylates position 2 of adenine 2503 in 23S rRNA and position 2 of adenine 37 in tRNAs. m2A2503 modification seems to play a crucial role in the proofreading step occurring at the peptidyl transferase center and thus would serve to optimize ribosomal fidelity. The protein is Dual-specificity RNA methyltransferase RlmN of Hahella chejuensis (strain KCTC 2396).